The primary structure comprises 593 residues: Tyrosine-protein phosphatase non-receptor type 9 (593 aa).

The residue at position 1 (methionine 1) is an N-acetylmethionine. Residues 1-21 (MEPATAPRPDMAPELTPEEEQ) are disordered. Residues 84 to 243 (EEPLRSEILS…NLGGYIKIDL (160 aa)) form the CRAL-TRIO domain. The Tyrosine-protein phosphatase domain occupies 303-574 (IYEEYEDIRR…YFCYKAILEF (272 aa)). Residues aspartate 470, 515–521 (CSAGIGR), and glutamine 559 contribute to the substrate site. Cysteine 515 (phosphocysteine intermediate) is an active-site residue.

Belongs to the protein-tyrosine phosphatase family. Non-receptor class 3 subfamily.

Its subcellular location is the cytoplasm. It carries out the reaction O-phospho-L-tyrosyl-[protein] + H2O = L-tyrosyl-[protein] + phosphate. Protein-tyrosine phosphatase that could participate in the transfer of hydrophobic ligands or in functions of the Golgi apparatus. The polypeptide is Tyrosine-protein phosphatase non-receptor type 9 (Ptpn9) (Rattus norvegicus (Rat)).